The following is a 298-amino-acid chain: ATP synthase gamma chain (298 aa).

It belongs to the ATPase gamma chain family. In terms of assembly, F-type ATPases have 2 components, CF(1) - the catalytic core - and CF(0) - the membrane proton channel. CF(1) has five subunits: alpha(3), beta(3), gamma(1), delta(1), epsilon(1). CF(0) has three main subunits: a, b and c.

It localises to the cell inner membrane. In terms of biological role, produces ATP from ADP in the presence of a proton gradient across the membrane. The gamma chain is believed to be important in regulating ATPase activity and the flow of protons through the CF(0) complex. This Francisella tularensis subsp. mediasiatica (strain FSC147) protein is ATP synthase gamma chain.